A 379-amino-acid chain; its full sequence is Cytochrome b (379 aa).

Helical transmembrane passes span 33–53, 77–98, 113–133, and 178–198; these read FGSL…FLAM, WLIR…FIHV, WNIG…GYVL, and FFAF…VHLL. Residues H83 and H97 each coordinate heme b. H182 and H196 together coordinate heme b. An a ubiquinone-binding site is contributed by H201. The next 4 helical transmembrane spans lie at 226-246, 288-308, 320-340, and 347-367; these read TKDL…ALFF, LGGV…PLLN, VTQV…WIGG, and FTTI…ILIP.

It belongs to the cytochrome b family. In terms of assembly, the cytochrome bc1 complex contains 11 subunits: 3 respiratory subunits (MT-CYB, CYC1 and UQCRFS1), 2 core proteins (UQCRC1 and UQCRC2) and 6 low-molecular weight proteins (UQCRH/QCR6, UQCRB/QCR7, UQCRQ/QCR8, UQCR10/QCR9, UQCR11/QCR10 and a cleavage product of UQCRFS1). This cytochrome bc1 complex then forms a dimer. Requires heme b as cofactor.

Its subcellular location is the mitochondrion inner membrane. Component of the ubiquinol-cytochrome c reductase complex (complex III or cytochrome b-c1 complex) that is part of the mitochondrial respiratory chain. The b-c1 complex mediates electron transfer from ubiquinol to cytochrome c. Contributes to the generation of a proton gradient across the mitochondrial membrane that is then used for ATP synthesis. In Akodon paranaensis (Parana grass mouse), this protein is Cytochrome b (MT-CYB).